Reading from the N-terminus, the 407-residue chain is Serine/threonine transporter SstT (407 aa).

9 helical membrane-spanning segments follow: residues 12-32 (GNLI…GISS), 42-62 (LGIL…FILI), 81-101 (IIIL…LANF), 141-161 (ALSS…GIAL), 179-199 (VLKI…GLVA), 218-238 (ILLV…IVFF), 245-267 (FPLI…SSAA), 288-308 (ISIP…IAIL), and 330-350 (IIAT…LLLI).

Belongs to the dicarboxylate/amino acid:cation symporter (DAACS) (TC 2.A.23) family.

Its subcellular location is the cell inner membrane. It carries out the reaction L-serine(in) + Na(+)(in) = L-serine(out) + Na(+)(out). The enzyme catalyses L-threonine(in) + Na(+)(in) = L-threonine(out) + Na(+)(out). Functionally, involved in the import of serine and threonine into the cell, with the concomitant import of sodium (symport system). The sequence is that of Serine/threonine transporter SstT from Campylobacter jejuni subsp. jejuni serotype O:23/36 (strain 81-176).